The chain runs to 432 residues: Adenylosuccinate synthetase (432 aa).

Residues 13–19 and 41–43 each bind GTP; these read GDEGKGK and GHT. D14 functions as the Proton acceptor in the catalytic mechanism. Residues D14 and G41 each contribute to the Mg(2+) site. Residues 14–17, 39–42, T130, R144, Q225, T240, and R304 each bind IMP; these read DEGK and NAGH. The Proton donor role is filled by H42. A substrate-binding site is contributed by 300 to 306; sequence ATTGRRR. GTP is bound by residues R306, 332–334, and 415–417; these read KLD and STG.

It belongs to the adenylosuccinate synthetase family. In terms of assembly, homodimer. It depends on Mg(2+) as a cofactor.

The protein resides in the cytoplasm. The catalysed reaction is IMP + L-aspartate + GTP = N(6)-(1,2-dicarboxyethyl)-AMP + GDP + phosphate + 2 H(+). It functions in the pathway purine metabolism; AMP biosynthesis via de novo pathway; AMP from IMP: step 1/2. In terms of biological role, plays an important role in the de novo pathway of purine nucleotide biosynthesis. Catalyzes the first committed step in the biosynthesis of AMP from IMP. The sequence is that of Adenylosuccinate synthetase from Baumannia cicadellinicola subsp. Homalodisca coagulata.